The following is a 389-amino-acid chain: 26S proteasome regulatory subunit 10B (389 aa).

K72 is modified (N6-acetyllysine). Residue 174 to 181 (GPPGTGKT) participates in ATP binding. Position 206 is an N6-acetyllysine (K206). Position 244 is a phosphoserine (S244).

The protein belongs to the AAA ATPase family. As to quaternary structure, component of the 19S proteasome regulatory particle complex. The 26S proteasome consists of a 20S core particle (CP) and two 19S regulatory subunits (RP). The regulatory particle is made of a lid composed of 9 subunits, a base containing 6 ATPases including PSMC6 and few additional components. Interacts with PAAF1.

The protein resides in the cytoplasm. It is found in the nucleus. In terms of biological role, component of the 26S proteasome, a multiprotein complex involved in the ATP-dependent degradation of ubiquitinated proteins. This complex plays a key role in the maintenance of protein homeostasis by removing misfolded or damaged proteins, which could impair cellular functions, and by removing proteins whose functions are no longer required. Therefore, the proteasome participates in numerous cellular processes, including cell cycle progression, apoptosis, or DNA damage repair. PSMC6 belongs to the heterohexameric ring of AAA (ATPases associated with diverse cellular activities) proteins that unfolds ubiquitinated target proteins that are concurrently translocated into a proteolytic chamber and degraded into peptides. This Bos taurus (Bovine) protein is 26S proteasome regulatory subunit 10B (PSMC6).